A 295-amino-acid chain; its full sequence is Lectin 11 (295 aa).

At 1–22 (MHYSHFYFIINNTNMTINAIPK) the chain is on the cytoplasmic side. The helical transmembrane segment at 23–45 (LFATKNSISLSIVIFMYLLILVA) threads the bilayer. Over 46–295 (NVKSDSSFNF…ILSWSFTSNM (250 aa)) the chain is Extracellular. An N-linked (GlcNAc...) asparagine glycan is attached at Asn-152.

Belongs to the leguminous lectin family.

It is found in the membrane. Its function is as follows. May be involved in arbuscular mycorrhizal (AM) symbiosis with AM fungi. The polypeptide is Lectin 11 (Medicago truncatula (Barrel medic)).